We begin with the raw amino-acid sequence, 284 residues long: Pantothenate synthetase (284 aa).

30–37 contacts ATP; that stretch reads MGNLHDGH. The active-site Proton donor is the histidine 37. Residue glutamine 61 coordinates (R)-pantoate. Glutamine 61 contacts beta-alanine. 149–152 contributes to the ATP binding site; sequence GEKD. Glutamine 155 is a binding site for (R)-pantoate. Residues isoleucine 178 and 186–189 contribute to the ATP site; that span reads LSSR.

This sequence belongs to the pantothenate synthetase family. In terms of assembly, homodimer.

Its subcellular location is the cytoplasm. It catalyses the reaction (R)-pantoate + beta-alanine + ATP = (R)-pantothenate + AMP + diphosphate + H(+). Its pathway is cofactor biosynthesis; (R)-pantothenate biosynthesis; (R)-pantothenate from (R)-pantoate and beta-alanine: step 1/1. Catalyzes the condensation of pantoate with beta-alanine in an ATP-dependent reaction via a pantoyl-adenylate intermediate. In Salmonella paratyphi B (strain ATCC BAA-1250 / SPB7), this protein is Pantothenate synthetase.